The following is a 354-amino-acid chain: Guanine nucleotide-binding protein G(t) subunit alpha-3 (354 aa).

Residues 1–27 (MGSGISSESKESAKRSKELEKKLQEDA) are disordered. A lipid anchor (N-myristoyl glycine) is attached at Gly-2. Basic and acidic residues predominate over residues 8 to 27 (ESKESAKRSKELEKKLQEDA). In terms of domain architecture, G-alpha spans 32–354 (RTVKLLLLGA…KENLKDCGLF (323 aa)). The tract at residues 35–48 (KLLLLGAGESGKST) is G1 motif. GTP-binding positions include 40-47 (GAGESGKS), 175-181 (LHSRVKT), 200-204 (DVGGQ), 269-272 (NKKD), and Ala-326. The Mg(2+) site is built by Ser-47 and Thr-181. Residues 173–181 (DVLHSRVKT) are G2 motif. The interval 196-205 (FRMFDVGGQR) is G3 motif. The G4 motif stretch occupies residues 265-272 (VLFLNKKD). The segment at 324–329 (TCATDT) is G5 motif.

Belongs to the G-alpha family. G(i/o/t/z) subfamily. G proteins are composed of 3 units; alpha, beta and gamma, respectively GNAT3, GNB1 and GNG13 for Gustducin heterotrimer for bitter taste transduction. The alpha chain contains the guanine nucleotide binding site. Component of the TAS2R14-GNAT3 complex, consisting of TAS2R14, GNAT3, GNB1 and GNG2; within the complex interacts with TAS2R14; this complex plays a role in the perception of bitterness. Gustducin heterotrimer may also be composed of GNAT3, GNB3 and GNG13. In terms of processing, potential N-myristoylation may anchor alpha-subunit to the inner surface of plasma membrane. In terms of tissue distribution, expressed in taste buds (sensory organs of clustered epithelial cells) of the circumvallate and foliate papillae of the tongue at protein level. Expressed in enteroendocrine L cells of the gut. Detected also in spermatozoa.

It is found in the cytoplasm. Functionally, guanine nucleotide-binding protein (G protein) alpha subunit playing a prominent role in bitter and sweet taste transduction as well as in umami (monosodium glutamate, monopotassium glutamate, and inosine monophosphate) taste transduction. Transduction by this alpha subunit involves coupling of specific cell-surface receptors with a cGMP-phosphodiesterase; Activation of phosphodiesterase lowers intracellular levels of cAMP and cGMP which may open a cyclic nucleotide-suppressible cation channel leading to influx of calcium, ultimately leading to release of neurotransmitter. Indeed, denatonium and strychnine induce transient reduction in cAMP and cGMP in taste tissue, whereas this decrease is inhibited by GNAT3 antibody. Gustducin heterotrimer transduces response to bitter and sweet compounds via regulation of phosphodiesterase for alpha subunit, as well as via activation of phospholipase C for beta and gamma subunits, with ultimate increase inositol trisphosphate and increase of intracellular Calcium. GNAT3 can functionally couple to taste receptors to transmit intracellular signal: receptor heterodimer TAS1R2/TAS1R3 senses sweetness and TAS1R1/TAS1R3 transduces umami taste, whereas the T2R family GPCRs such as TAS2R14 act as bitter sensors. Also functions as lumenal sugar sensors in the gut to control the expression of the Na+-glucose transporter SGLT1 in response to dietaty sugar, as well as the secretion of Glucagon-like peptide-1, GLP-1 and glucose-dependent insulinotropic polypeptide, GIP. Thus, may modulate the gut capacity to absorb sugars, with implications in malabsorption syndromes and diet-related disorders including diabetes and obesity. This Homo sapiens (Human) protein is Guanine nucleotide-binding protein G(t) subunit alpha-3 (GNAT3).